Reading from the N-terminus, the 367-residue chain is Phosphoribosylaminoimidazole-succinocarboxamide synthase (367 aa).

This sequence belongs to the SAICAR synthetase family.

It carries out the reaction 5-amino-1-(5-phospho-D-ribosyl)imidazole-4-carboxylate + L-aspartate + ATP = (2S)-2-[5-amino-1-(5-phospho-beta-D-ribosyl)imidazole-4-carboxamido]succinate + ADP + phosphate + 2 H(+). It functions in the pathway purine metabolism; IMP biosynthesis via de novo pathway; 5-amino-1-(5-phospho-D-ribosyl)imidazole-4-carboxamide from 5-amino-1-(5-phospho-D-ribosyl)imidazole-4-carboxylate: step 1/2. The chain is Phosphoribosylaminoimidazole-succinocarboxamide synthase from Shewanella baltica (strain OS223).